The primary structure comprises 162 residues: Transcription elongation factor GreA (162 aa).

Positions 44-69 form a coiled coil; sequence SENAEYEAAREKQAFVEARIKHLEDI.

It belongs to the GreA/GreB family.

Functionally, necessary for efficient RNA polymerase transcription elongation past template-encoded arresting sites. The arresting sites in DNA have the property of trapping a certain fraction of elongating RNA polymerases that pass through, resulting in locked ternary complexes. Cleavage of the nascent transcript by cleavage factors such as GreA or GreB allows the resumption of elongation from the new 3'terminus. GreA releases sequences of 2 to 3 nucleotides. The sequence is that of Transcription elongation factor GreA from Rickettsia bellii (strain RML369-C).